The sequence spans 723 residues: MPLFFRKRKPSEEARKRLEYQMCLAKEAGADDILDISKCELSEIPFGAFATCKVLQKKVLIVHTNHLTSLLPKSCSLLSLATIKVLDLHDNQLTALPDDLGQLTALQVLNVERNQLMQLPRSIGNLTQLQTLNVKDNKLKELPDTVGELRSLRTLNISGNEIQRLPQMLAHVRTLEMLSLDASAMVYPPREVCGAGTAAILQFLCKESGLEYYPPSQYLLPILEQDGIENSRDSPDGPTDRFSREELEWQNRFSDYEKRKEQKMLEKLEFERRLELGQREHTQLLQQSSSQKDEILQTVKEEQSRLEQGLSEHQRHLNAERQRLQEQLKQTEQNISSRIQKLLQDNQRQKKSSEILKSLENERIRMEQLMSITQEETESLRRRDVASAMQQMLTESCKNRLIQMAYESQRQNLVQQACSSMAEMDERFQQILSWQQMDQNKAISQILQESAMQKAAFEALQVKKDLMHRQIRSQIKLIETELLQLTQLELKRKSLDTESLQEMISEQRWALSSLLQQLLKEKQQREEELREILTELEAKSETRQENYWLIQYQRLLNQKPLSLKLQEEGMERQLVALLEELSAEHYLPIFAHHRLSLDLLSQMSPGDLAKVGVSEAGLQHEILRRVQELLDAARIQPELKPPMGEVVTPTAPQEPPESVRPSAPPAELEVQASECVVCLEREAQMIFLNCGHVCCCQQCCQPLRTCPLCRQDIAQRLRIYHSS.

6 LRR repeats span residues 30-51 (ADDI…AFAT), 56-77 (QKKV…SCSL), 82-103 (TIKV…LGQL), 105-127 (ALQV…GNLT), 128-149 (QLQT…VGEL), and 151-172 (SLRT…LAHV). Phosphoserine is present on S234. 2 coiled-coil regions span residues 254-380 (SDYE…TESL) and 510-562 (ALSS…KPLS). The tract at residues 282–314 (TQLLQQSSSQKDEILQTVKEEQSRLEQGLSEHQ) is disordered. Residues 291–314 (QKDEILQTVKEEQSRLEQGLSEHQ) are compositionally biased toward basic and acidic residues. Residues 569–632 (GMERQLVALL…LRRVQELLDA (64 aa)) form the SAM domain. The residue at position 604 (S604) is a Phosphoserine. A disordered region spans residues 642 to 665 (PMGEVVTPTAPQEPPESVRPSAPP). Short sequence motifs (PTAP motif) lie at residues 649–652 (PTAP) and 661–664 (PSAP). The segment at 675–710 (CVVCLEREAQMIFLNCGHVCCCQQCCQPLRTCPLCR) adopts an RING-type zinc-finger fold.

In terms of assembly, interacts with TSG101. Interacts with PHF23. Interacts with FUS. In terms of processing, ubiquitination promoted by PHF23 leads to proteasomal degradation. In terms of tissue distribution, highly expressed in adult spinal cord motoneurons as well as in fetal spinal cord and muscle tissue.

It is found in the cytoplasm. The enzyme catalyses S-ubiquitinyl-[E2 ubiquitin-conjugating enzyme]-L-cysteine + [acceptor protein]-L-lysine = [E2 ubiquitin-conjugating enzyme]-L-cysteine + N(6)-ubiquitinyl-[acceptor protein]-L-lysine.. Its pathway is protein modification; protein ubiquitination. E3 ubiquitin-protein ligase that mediates monoubiquitination of TSG101 at multiple sites, leading to inactivate the ability of TSG101 to sort endocytic (EGF receptors) and exocytic (HIV-1 viral proteins) cargos. Bacterial recognition protein that defends the cytoplasm from invasive pathogens. Localizes to several intracellular bacterial pathogens and generates the bacteria-associated ubiquitin signal leading to autophagy-mediated intracellular bacteria degradation (xenophagy). The sequence is that of E3 ubiquitin-protein ligase LRSAM1 from Homo sapiens (Human).